A 246-amino-acid polypeptide reads, in one-letter code: NAD-dependent protein deacylase (246 aa).

The region spanning 1–245 (MKEFITKHRD…ELIREILDNP (245 aa)) is the Deacetylase sirtuin-type domain. 20–39 (GAGISAESGIPTFRGSEGLW) lines the NAD(+) pocket. The substrate site is built by Tyr64 and Arg67. 98–101 (QNVD) contacts NAD(+). His116 serves as the catalytic Proton acceptor. 4 residues coordinate Zn(2+): Cys124, Cys127, Cys146, and Cys149. NAD(+)-binding positions include 186-188 (GTS), 212-214 (NPE), and Thr230.

Belongs to the sirtuin family. Class III subfamily. Zn(2+) serves as cofactor.

The protein localises to the cytoplasm. The catalysed reaction is N(6)-acetyl-L-lysyl-[protein] + NAD(+) + H2O = 2''-O-acetyl-ADP-D-ribose + nicotinamide + L-lysyl-[protein]. It carries out the reaction N(6)-succinyl-L-lysyl-[protein] + NAD(+) + H2O = 2''-O-succinyl-ADP-D-ribose + nicotinamide + L-lysyl-[protein]. NAD-dependent lysine deacetylase and desuccinylase that specifically removes acetyl and succinyl groups on target proteins. Modulates the activities of several proteins which are inactive in their acylated form. This is NAD-dependent protein deacylase from Leptospira interrogans serogroup Icterohaemorrhagiae serovar copenhageni (strain Fiocruz L1-130).